A 286-amino-acid chain; its full sequence is Ribonuclease H1 (286 aa).

A compositionally biased stretch (basic and acidic residues) spans 101 to 115 (EPLDGDGHESAEPYA). Residues 101–127 (EPLDGDGHESAEPYAKHMKPSVEPAPP) are disordered. The 147-residue stretch at 136–282 (MGDFVVVYTD…ADRLAREGAK (147 aa)) folds into the RNase H type-1 domain. Residues Asp145, Glu186, Asp210, and Asp274 each coordinate Mg(2+).

This sequence belongs to the RNase H family. Monomer. The cofactor is Mg(2+). In terms of tissue distribution, ubiquitous.

The protein resides in the cytoplasm. The enzyme catalyses Endonucleolytic cleavage to 5'-phosphomonoester.. With respect to regulation, in the presence of magnesium, manganese is inhibitory. Endonuclease that specifically degrades the RNA of RNA-DNA hybrids. Plays a role in RNA polymerase II (RNAp II) transcription termination by degrading R-loop RNA-DNA hybrid formation at G-rich pause sites located downstream of the poly(A) site and behind the elongating RNAp II. In Homo sapiens (Human), this protein is Ribonuclease H1 (RNASEH1).